We begin with the raw amino-acid sequence, 789 residues long: Ent-kaur-16-ene synthase, chloroplastic (789 aa).

Mg(2+) contacts are provided by Asp536, Asp540, Asn680, Ser684, and Glu688. Residues 536–540 (DDFYD) carry the DDXXD motif motif.

It belongs to the terpene synthase family. It depends on Mg(2+) as a cofactor. In terms of processing, the N-terminus is blocked. In terms of tissue distribution, abundant in most tissues. Present in low amounts in mature cotyledons.

The protein localises to the plastid. Its subcellular location is the chloroplast. It carries out the reaction ent-copalyl diphosphate = ent-kaur-16-ene + diphosphate. It participates in plant hormone biosynthesis; gibberellin biosynthesis. Catalyzes the conversion of ent-copalyl diphosphate to the gibberellin precursor ent-kaur-16-ene. The protein is Ent-kaur-16-ene synthase, chloroplastic of Cucurbita maxima (Pumpkin).